A 180-amino-acid chain; its full sequence is Transcription factor HES-7.1-B (180 aa).

The bHLH domain occupies 13–70 (HRKLLKPLVEKRRRERINNSLEKLRIFLSQTLKSEKLKNPKVEKAEILECTVQFLQSR). One can recognise an Orange domain in the interval 84–116 (YQSGFQHCLETTLHFMNSKPDMNGVTKELLSHQ). The WRPW motif motif lies at 176-179 (WRPW).

In terms of assembly, transcription repression requires formation of a complex with a corepressor protein of the Groucho/TLE family. Expressed in the presumptive midbrain-hindbrain boundary (MHB) as early as the early gastrula stage (stage 10.5). Expression in the MHB continues through to tailbud stage. Also transiently expressed in the eye anlage at late neurula stage.

Its subcellular location is the nucleus. Transcriptional repressor. Represses transcription from both N box- and E box-containing promoters. Demarcates the prospective midbrain-hindbrain boundary (MHB) region in the neuroectoderm in early gastrulae embryos by repressing transcription of a number of target genes. This chain is Transcription factor HES-7.1-B (hes7.1-b), found in Xenopus laevis (African clawed frog).